The primary structure comprises 258 residues: Tryptophan synthase alpha chain (258 aa).

Catalysis depends on proton acceptor residues Glu47 and Asp58.

The protein belongs to the TrpA family. Tetramer of two alpha and two beta chains.

The catalysed reaction is (1S,2R)-1-C-(indol-3-yl)glycerol 3-phosphate + L-serine = D-glyceraldehyde 3-phosphate + L-tryptophan + H2O. It functions in the pathway amino-acid biosynthesis; L-tryptophan biosynthesis; L-tryptophan from chorismate: step 5/5. Its function is as follows. The alpha subunit is responsible for the aldol cleavage of indoleglycerol phosphate to indole and glyceraldehyde 3-phosphate. This Bacillus cereus (strain B4264) protein is Tryptophan synthase alpha chain.